The sequence spans 382 residues: Gap junction alpha-1 protein (382 aa).

At 2-23 (GGWSALAKLLGKVQAYSPAGGK) the chain is on the cytoplasmic side. Serine 5 is modified (phosphoserine). A helical membrane pass occupies residues 24–44 (VWLSVLFIFRILLLGTAVESA). At 45–76 (WGDEQSAFRCNTQQPGCENVCYDKSFPISHVR) the chain is on the extracellular side. Disulfide bonds link cysteine 54–cysteine 192 and cysteine 187–cysteine 198. The helical transmembrane segment at 77-97 (FWVLQIIFVSVPTLLYLAHVF) threads the bilayer. Topologically, residues 98-155 (YVMRKEEKLNKKEEELKVAQTDGANVDMHLKQIEIKKFKYGIEEHGKVKMRGGLLRTY) are cytoplasmic. Lysine 144 participates in a covalent cross-link: Glycyl lysine isopeptide (Lys-Gly) (interchain with G-Cter in SUMO). A helical transmembrane segment spans residues 156–176 (IISILFKSVFEVAFLLIQWYI). Residues 177–207 (YGFSLSAVYTCKREPCPHQVDCFLSRPTEKT) are Extracellular-facing. The chain crosses the membrane as a helical span at residues 208–228 (IFIIFMLVVSLVSLALNIIEL). The Cytoplasmic segment spans residues 229–382 (FYVFFKGVKD…SRPRPDDLEI (154 aa)). A Glycyl lysine isopeptide (Lys-Gly) (interchain with G-Cter in SUMO) cross-link involves residue lysine 237. Positions 244–382 (SDPYHATTGP…SRPRPDDLEI (139 aa)) are interaction with NOV. Tyrosine 247 carries the phosphotyrosine modification. Phosphoserine occurs at positions 255, 257, and 262. Positions 264–382 (EYAYFNGCSS…SRPRPDDLEI (119 aa)) are interaction with UBQLN4. Cysteine 271 carries the post-translational modification S-nitrosocysteine. Threonine 275 carries the post-translational modification Phosphothreonine. Phosphoserine is present on residues serine 306 and serine 314. The span at 317–332 (QNRMGQAGSTISNSHA) shows a compositional bias: polar residues. The interval 317–382 (QNRMGQAGST…SRPRPDDLEI (66 aa)) is disordered. Serine 325 is subject to Phosphoserine; by CK1. Threonine 326 is modified (phosphothreonine). 2 positions are modified to phosphoserine; by CK1: serine 328 and serine 330. Phosphoserine is present on residues serine 344 and serine 365. Over residues 362–374 (RPSSRASSRASSR) the composition is skewed to low complexity. Residue serine 368 is modified to Phosphoserine; by PKC/PRKCG and PKC/PRKCD. 2 positions are modified to phosphoserine: serine 369 and serine 373.

It belongs to the connexin family. Alpha-type (group II) subfamily. A connexon is composed of a hexamer of connexins. Interacts with SGSM3. Interacts with RIC1/CIP150. Interacts with CNST and CSNK1D. Interacts (via C-terminus) with TJP1. Interacts (via C-terminus) with SRC (via SH3 domain). Interacts (not ubiquitinated) with UBQLN4 (via UBA domain). Interacts with NOV. Interacts with TMEM65. Interacts with ANK3/ANKG and PKP2. Post-translationally, phosphorylation at Ser-325, Ser-328 and Ser-330 by CK1 modulates gap junction assembly. Phosphorylated at Ser-368 by PRKCG; phosphorylation induces disassembly of gap junction plaques and inhibition of gap junction activity. Phosphorylation at Ser-368 by PRKCD triggers its internalization into small vesicles leading to proteasome-mediated degradation. Sumoylated with SUMO1, SUMO2 and SUMO3, which may regulate the level of functional Cx43 gap junctions at the plasma membrane. May be desumoylated by SENP1 or SENP2. In terms of processing, S-nitrosylation at Cys-271 is enriched at the muscle endothelial gap junction in arteries, it augments channel permeability and may regulate of smooth muscle cell to endothelial cell communication. Post-translationally, acetylated in the developing cortex; leading to delocalization from the cell membrane.

The protein resides in the cell membrane. It localises to the cell junction. It is found in the gap junction. Its subcellular location is the endoplasmic reticulum. Gap junction protein that acts as a regulator of bladder capacity. A gap junction consists of a cluster of closely packed pairs of transmembrane channels, the connexons, through which materials of low MW diffuse from one cell to a neighboring cell. May play a critical role in the physiology of hearing by participating in the recycling of potassium to the cochlear endolymph. Negative regulator of bladder functional capacity: acts by enhancing intercellular electrical and chemical transmission, thus sensitizing bladder muscles to cholinergic neural stimuli and causing them to contract. May play a role in cell growth inhibition through the regulation of NOV expression and localization. Plays an essential role in gap junction communication in the ventricles. In Canis lupus familiaris (Dog), this protein is Gap junction alpha-1 protein (GJA1).